Reading from the N-terminus, the 304-residue chain is MIQNSRPSLLQPQDVGDTVETLMLHPVIKAFLCGSISGTCSTLLFQPLDLLKTRLQTLQPSDHGSRRVGMLAVLLKVVRTESLLGLWKGMSPSIVRCVPGVGIYFGTLYSLKQYFLRGHPPTALESVMLGVGSRSVAGVCMSPITVIKTRYESGKYGYESIYAALRSIYHSEGHRGLFSGLTATLLRDAPFSGIYLMFYNQTKNIVPHDQVDATLIPITNFSCGIFAGILASLVTQPADVIKTHMQLYPLKFQWIGQAVTLIFKDYGLRGFFQGGIPRALRRTLMAAMAWTVYEEMMAKMGLKS.

Solcar repeat units lie at residues 25–114, 121–205, and 215–299; these read HPVI…LKQY, PTAL…TKNI, and LIPI…MMAK. 6 helical membrane passes run 31–56, 89–115, 127–152, 180–203, 219–245, and 274–292; these read FLCGSISGTCSTLLFQPLDLLKTRLQ, GMSPSIVRCVPGVGIYFGTLYSLKQYF, VMLGVGSRSVAGVCMSPITVIKTRYE, GLTATLLRDAPFSGIYLMFYNQTK, TNFSCGIFAGILASLVTQPADVIKTHM, and GGIPRALRRTLMAAMAWTV.

The protein belongs to the mitochondrial carrier (TC 2.A.29) family. SLC25A38 subfamily. As to expression, preferentially expressed in erythroid cells.

Its subcellular location is the mitochondrion inner membrane. The enzyme catalyses glycine(in) = glycine(out). Functionally, mitochondrial glycine transporter that imports glycine into the mitochondrial matrix. Plays an important role in providing glycine for the first enzymatic step in heme biosynthesis, the condensation of glycine with succinyl-CoA to produce 5-aminolevulinate (ALA) in the mitochondrial matrix. Required during erythropoiesis. Plays a role as pro-apoptotic protein that induces caspase-dependent apoptosis. This Homo sapiens (Human) protein is Mitochondrial glycine transporter.